The chain runs to 466 residues: Citrate synthase, mitochondrial (466 aa).

Residues 1–27 (MALLTAAARLLGTKNASCLVLAARHAS) constitute a mitochondrion transit peptide. Residues 2–21 (ALLTAAARLLGTKNASCLVL) carry the SIFI-degron motif. The residue at position 57 (lysine 57) is an N6-succinyllysine. N6-acetyllysine; alternate is present on lysine 76. Lysine 76 is modified (N6-succinyllysine; alternate). N6-succinyllysine occurs at positions 103 and 193. The active site involves histidine 301. Residues lysine 321 and lysine 327 each carry the N6-acetyllysine; alternate modification. 2 positions are modified to N6-succinyllysine; alternate: lysine 321 and lysine 327. Histidine 347 is an active-site residue. An oxaloacetate-binding site is contributed by arginine 356. The residue at position 375 (lysine 375) is an N6-acetyllysine; alternate. Lysine 375 bears the N6-succinyllysine; alternate mark. An N6-acetyllysine modification is found at lysine 382. Position 393 is an N6-acetyllysine; alternate (lysine 393). An N6-succinyllysine; alternate modification is found at lysine 393. At lysine 395 the chain carries N6,N6,N6-trimethyllysine. Aspartate 402 is a catalytic residue. Residues arginine 428 and arginine 448 each coordinate oxaloacetate. At lysine 450 the chain carries N6-succinyllysine. Lysine 459 bears the N6-acetyllysine; alternate mark. Lysine 459 carries the post-translational modification N6-succinyllysine; alternate.

This sequence belongs to the citrate synthase family. As to quaternary structure, homodimer. Post-translationally, methylated. Trimethylation at Lys-395 by CSKMT decreases citrate synthase activity. In terms of processing, in response to mitochondrial stress, the precursor protein is ubiquitinated by the SIFI complex in the cytoplasm before mitochondrial import, leading to its degradation. Within the SIFI complex, UBR4 initiates ubiquitin chain that are further elongated or branched by KCMF1.

The protein resides in the mitochondrion matrix. It catalyses the reaction oxaloacetate + acetyl-CoA + H2O = citrate + CoA + H(+). The protein operates within carbohydrate metabolism; tricarboxylic acid cycle; isocitrate from oxaloacetate: step 1/2. Its function is as follows. Key enzyme of the Krebs tricarboxylic acid cycle which catalyzes the synthesis of citrate from acetyl coenzyme A and oxaloacetate. This Homo sapiens (Human) protein is Citrate synthase, mitochondrial (CS).